The following is a 289-amino-acid chain: ATP synthase gamma chain (289 aa).

The protein belongs to the ATPase gamma chain family. As to quaternary structure, F-type ATPases have 2 components, CF(1) - the catalytic core - and CF(0) - the membrane proton channel. CF(1) has five subunits: alpha(3), beta(3), gamma(1), delta(1), epsilon(1). CF(0) has three main subunits: a, b and c.

Its subcellular location is the cell inner membrane. Produces ATP from ADP in the presence of a proton gradient across the membrane. The gamma chain is believed to be important in regulating ATPase activity and the flow of protons through the CF(0) complex. In Anaeromyxobacter dehalogenans (strain 2CP-C), this protein is ATP synthase gamma chain.